The chain runs to 495 residues: Glycerol kinase (495 aa).

Residue T14 coordinates ADP. ATP-binding residues include T14, T15, and S16. T14 is a binding site for sn-glycerol 3-phosphate. Residue R18 coordinates ADP. 4 residues coordinate sn-glycerol 3-phosphate: R84, E85, Y136, and D246. The glycerol site is built by R84, E85, Y136, D246, and Q247. Residues T268 and G312 each contribute to the ADP site. T268, G312, Q316, and G413 together coordinate ATP. 2 residues coordinate ADP: G413 and N417.

It belongs to the FGGY kinase family.

It catalyses the reaction glycerol + ATP = sn-glycerol 3-phosphate + ADP + H(+). It functions in the pathway polyol metabolism; glycerol degradation via glycerol kinase pathway; sn-glycerol 3-phosphate from glycerol: step 1/1. Inhibited by fructose 1,6-bisphosphate (FBP). Its function is as follows. Key enzyme in the regulation of glycerol uptake and metabolism. Catalyzes the phosphorylation of glycerol to yield sn-glycerol 3-phosphate. This Bdellovibrio bacteriovorus (strain ATCC 15356 / DSM 50701 / NCIMB 9529 / HD100) protein is Glycerol kinase.